Here is a 269-residue protein sequence, read N- to C-terminus: MPELPEVETSRRGIEPYLVGHSIQYAVVRNARLRWPVSEQILALSDQPVLSVQRRAKYLLIELASGWIIVHLGMSGSLRMLAEETEAGKHDHVDLVISNGMTLRYTDPRRFGAWLWCDDLATSNVLAHLGPEPLSEAFTGAYLYEKSRNKRTLIKPWLMDNKLVVGVGNIYASESLFTAGILPDRPAGSLSKVEAEVLVATIKAVLLRSIEQGGTTLRDFLQSDGKPGYFAQELQVYGRAGEPCRACGTPIESAKHGQRSTFFCPRCQR.

Residue P2 is the Schiff-base intermediate with DNA of the active site. The active-site Proton donor is E3. Residue K57 is the Proton donor; for beta-elimination activity of the active site. H90, R109, and K150 together coordinate DNA. Residues 235-269 form an FPG-type zinc finger; the sequence is QVYGRAGEPCRACGTPIESAKHGQRSTFFCPRCQR. The Proton donor; for delta-elimination activity role is filled by R259.

It belongs to the FPG family. In terms of assembly, monomer. Zn(2+) serves as cofactor.

The enzyme catalyses Hydrolysis of DNA containing ring-opened 7-methylguanine residues, releasing 2,6-diamino-4-hydroxy-5-(N-methyl)formamidopyrimidine.. It catalyses the reaction 2'-deoxyribonucleotide-(2'-deoxyribose 5'-phosphate)-2'-deoxyribonucleotide-DNA = a 3'-end 2'-deoxyribonucleotide-(2,3-dehydro-2,3-deoxyribose 5'-phosphate)-DNA + a 5'-end 5'-phospho-2'-deoxyribonucleoside-DNA + H(+). In terms of biological role, involved in base excision repair of DNA damaged by oxidation or by mutagenic agents. Acts as a DNA glycosylase that recognizes and removes damaged bases. Has a preference for oxidized purines, such as 7,8-dihydro-8-oxoguanine (8-oxoG). Has AP (apurinic/apyrimidinic) lyase activity and introduces nicks in the DNA strand. Cleaves the DNA backbone by beta-delta elimination to generate a single-strand break at the site of the removed base with both 3'- and 5'-phosphates. The chain is Formamidopyrimidine-DNA glycosylase from Serratia proteamaculans (strain 568).